A 342-amino-acid chain; its full sequence is Peptide chain release factor 1 (342 aa).

Glutamine 211 is modified (N5-methylglutamine). The interval 262-282 (KEREISQKRKSQIGTGERSEK) is disordered.

Belongs to the prokaryotic/mitochondrial release factor family. Methylated by PrmC. Methylation increases the termination efficiency of RF1.

Its subcellular location is the cytoplasm. Peptide chain release factor 1 directs the termination of translation in response to the peptide chain termination codons UAG and UAA. The sequence is that of Peptide chain release factor 1 (prfA) from Thermotoga maritima (strain ATCC 43589 / DSM 3109 / JCM 10099 / NBRC 100826 / MSB8).